The chain runs to 287 residues: 3-beta-hydroxysteroid sulfotransferase (287 aa).

44-49 (KSGTNW) provides a ligand contact to 3'-phosphoadenylyl sulfate. Positions 72 and 77 each coordinate substrate. His-99 acts as the Proton acceptor in catalysis. 3'-phosphoadenylyl sulfate contacts are provided by residues Arg-121, Ser-129, Tyr-184, 218–223 (SSFKFM), and 247–249 (RKG).

Belongs to the sulfotransferase 1 family. Homodimer. Liver, intestine and kidney.

The protein resides in the cytoplasm. It catalyses the reaction an alcohol + 3'-phosphoadenylyl sulfate = an alkyl sulfate + adenosine 3',5'-bisphosphate + H(+). Functionally, sulfotransferase that utilizes 3'-phospho-5'-adenylyl sulfate (PAPS) as sulfonate donor to catalyze the sulfonation of 3-beta-hydroxyl groups of neutral steroids. High preference for C21 steroid (pregnenolone). This Cavia porcellus (Guinea pig) protein is 3-beta-hydroxysteroid sulfotransferase (STD2).